The chain runs to 461 residues: Ufm1-specific protease 2 (461 aa).

Residues cysteine 294, aspartate 418, and histidine 420 contribute to the active site.

Belongs to the peptidase C78 family. Expressed at high level in brain, kidney, stomach, skeletal muscle, liver, pancreas, spleen and testis.

The protein resides in the endoplasmic reticulum. Its subcellular location is the cytoplasm. It is found in the nucleus. Its function is as follows. Thiol-dependent isopeptidase that specifically cleaves UFM1, a ubiquitin-like modifier protein, from conjugated proteins, such as CD274/PD-L1, CYB5R3, DDRGK1, MRE11, RPL26/uL24, TRIP4 and RPL26/uL24. While it is also able to mediate the processing of UFM1 precursors, a prerequisite for conjugation reactions, UFSP2 mainly acts as a protein deUFMylase that mediates deconjugation of UFM1 from target proteins. Mediates deUFMylation of RPL26/uL24, a critical step to release the UFM1 ribosome E3 ligase (UREL) complex during the recycling of 60S ribosome subunits from the endoplasmic reticulum. Catalyzes deUFMylation of TRIP4, regulating intracellular nuclear receptors transactivation and thereby regulate cell proliferation and differentiation. This Mus musculus (Mouse) protein is Ufm1-specific protease 2.